Consider the following 256-residue polypeptide: Pimeloyl-[acyl-carrier protein] methyl ester esterase (256 aa).

The region spanning 15–242 (HLVLLHGWGL…AAHAPFISHP (228 aa)) is the AB hydrolase-1 domain. Substrate-binding positions include Trp-22, 82–83 (SL), and 143–147 (FLALQ). Ser-82 functions as the Nucleophile in the catalytic mechanism. Residues Asp-207 and His-235 contribute to the active site. His-235 is a substrate binding site.

The protein belongs to the AB hydrolase superfamily. Carboxylesterase BioH family. As to quaternary structure, monomer.

Its subcellular location is the cytoplasm. The enzyme catalyses 6-carboxyhexanoyl-[ACP] methyl ester + H2O = 6-carboxyhexanoyl-[ACP] + methanol + H(+). Its pathway is cofactor biosynthesis; biotin biosynthesis. Functionally, the physiological role of BioH is to remove the methyl group introduced by BioC when the pimeloyl moiety is complete. It allows to synthesize pimeloyl-ACP via the fatty acid synthetic pathway through the hydrolysis of the ester bonds of pimeloyl-ACP esters. In Salmonella newport (strain SL254), this protein is Pimeloyl-[acyl-carrier protein] methyl ester esterase.